A 159-amino-acid polypeptide reads, in one-letter code: 2-C-methyl-D-erythritol 2,4-cyclodiphosphate synthase (159 aa).

A divalent metal cation is bound by residues Asp-10 and His-12. Residues 10-12 and 36-37 each bind 4-CDP-2-C-methyl-D-erythritol 2-phosphate; these read DVH and HS. His-44 contributes to the a divalent metal cation binding site. Residues 58–60, 63–67, and Arg-144 contribute to the 4-CDP-2-C-methyl-D-erythritol 2-phosphate site; these read DIG and FSDTD.

It belongs to the IspF family. In terms of assembly, homotrimer. A divalent metal cation serves as cofactor.

The enzyme catalyses 4-CDP-2-C-methyl-D-erythritol 2-phosphate = 2-C-methyl-D-erythritol 2,4-cyclic diphosphate + CMP. The protein operates within isoprenoid biosynthesis; isopentenyl diphosphate biosynthesis via DXP pathway; isopentenyl diphosphate from 1-deoxy-D-xylulose 5-phosphate: step 4/6. In terms of biological role, involved in the biosynthesis of isopentenyl diphosphate (IPP) and dimethylallyl diphosphate (DMAPP), two major building blocks of isoprenoid compounds. Catalyzes the conversion of 4-diphosphocytidyl-2-C-methyl-D-erythritol 2-phosphate (CDP-ME2P) to 2-C-methyl-D-erythritol 2,4-cyclodiphosphate (ME-CPP) with a corresponding release of cytidine 5-monophosphate (CMP). This Paraburkholderia xenovorans (strain LB400) protein is 2-C-methyl-D-erythritol 2,4-cyclodiphosphate synthase.